Reading from the N-terminus, the 1857-residue chain is Fer-1-like protein 6 (1857 aa).

Residues 1–1824 (MFGLKVKKKR…YLIWKNYKKY (1824 aa)) are Cytoplasmic-facing. The interval 15–63 (KGLILANKAAKDSQGDTEALQEEPSHQEGPRGDLVHDDASIFPVPSASP) is disordered. The span at 37 to 53 (EPSHQEGPRGDLVHDDA) shows a compositional bias: basic and acidic residues. 2 consecutive C2 domains span residues 65 to 181 (RRSK…QFCN) and 225 to 356 (PIEK…DKGF). Basic and acidic residues predominate over residues 426 to 447 (SKDKDSKSSKGKDKADKTEDGK). The interval 426–469 (SKDKDSKSSKGKDKADKTEDGKSQQASNKTNSTEVEVESFDVPP) is disordered. Over residues 448-459 (SQQASNKTNSTE) the composition is skewed to polar residues. 2 C2 domains span residues 810 to 937 (GTNH…RLCY) and 969 to 1099 (PVEP…LAPI). Ca(2+)-binding residues include Asp842, Asp848, Asp904, and Asp906. Disordered regions lie at residues 1101 to 1148 (QVDG…VVPD), 1161 to 1203 (PDSS…RTIA), and 1224 to 1246 (AQKAKERNPKGKKGNTEAKPDEV). The span at 1113-1129 (DSLTATESSGAHSSSQD) shows a compositional bias: polar residues. A compositionally biased stretch (basic and acidic residues) spans 1178–1189 (PPKDGKPKDPRK). Residues 1190-1200 (PSRRSTKRRKR) show a composition bias toward basic residues. Residues 1226 to 1245 (KAKERNPKGKKGNTEAKPDE) show a composition bias toward basic and acidic residues. 2 C2 domains span residues 1338–1457 (DSGQ…AICG) and 1578–1729 (DMPQ…KACD). Ca(2+) is bound by residues Asp1372, Asp1378, Asp1427, Asp1429, and Asp1435. Residues 1825 to 1845 (IIIAFILIILIIFLVLFIYTL) traverse the membrane as a helical segment. At 1846-1857 (PGAISRRIVVGS) the chain is on the extracellular side.

Belongs to the ferlin family. The cofactor is Ca(2+).

The protein resides in the membrane. This is Fer-1-like protein 6 (FER1L6) from Homo sapiens (Human).